Here is a 655-residue protein sequence, read N- to C-terminus: MSELSDEASEPELLKRSLSMWHGLGAQGSPEELDVPLDLHTAASIGQHEVVKECVQRGELDLNKKNGGGWTALMYASYIGHDTIVHLLLEAGVSVNVPTPEGQTPLMLASSCGNESIAYFLLQQGAELEMKDIHGWTALFHCTSAGHQQMVKFLLESGANANVREPVYGYTPLMEAAASGHEIIVQYFLNHGVKVDTRDHSGATACMLARQFGHMKIVALMETHSPVLPKSLYRSPEKYEDLSSSDESWPVPQRQRPCRKKGLSIHEGPRALAKITAIGLGGKTQTTYEQVPPRGYVTFTSSDENTMESEGLCYRDVTSPINEQDVESSSSSSREEPTFCASLGPVWRSSSSDGLARAQGLSSEASIESNEDSDHARKSSVRKQTRSYLKNKSRHGNSDGHWPSSTGPASIPGSEPQTEKSPYSGPQDLATLLEQIGCLKYLQVFEEQDIDLRIFLTLTESDLKEIGITLFGPKRKMTSAIARWHSSARPPSDALELAYADRLETEMQELAIQLHKCCEEAEALRGQVSQEQELRAVVESCLLEQDSARKDIHAQLQEAQTLAQDAALVLDQLRACQAELSARLRQHHSPREGTPNPHFLSADSKGWPIPLQALSLPELSGALEDRVHEMGQALCSVTQSLEKLQMLNAKKWREP.

The tract at residues 1–421 (MSELSDEASE…PGSEPQTEKS (421 aa)) is interaction with NEK7. 2 positions are modified to phosphoserine: Ser-2 and Ser-5. ANK repeat units follow at residues 34-64 (DVPL…DLNK), 68-97 (GGWT…SVNV), 101-130 (EGQT…ELEM), 134-163 (HGWT…NANV), 168-197 (YGYT…KVDT), and 201-220 (SGAT…IVAL). The residue at position 96 (Asn-96) is a 3-hydroxyasparagine. Ser-201, Ser-225, Ser-243, Ser-244, and Ser-245 each carry phosphoserine. The disordered stretch occupies residues 314-426 (YRDVTSPINE…QTEKSPYSGP (113 aa)). Phosphothreonine is present on Thr-318. Residues Ser-319, Ser-366, Ser-369, and Ser-373 each carry the phosphoserine modification. Residues 378 to 395 (KSSVRKQTRSYLKNKSRH) are compositionally biased toward basic residues. The region spanning 424-487 (SGPQDLATLL…TSAIARWHSS (64 aa)) is the SAM domain. Residues 500 to 575 (ADRLETEMQE…AALVLDQLRA (76 aa)) adopt a coiled-coil conformation. Position 540 is a phosphoserine (Ser-540).

Homooligomer. Interacts (via SAM domain) with ANKS6 (via SAM domain). Interacts with BICC1. Interacts with NPHP1. Interacts with NEK8. Interacts with HIF1AN. Interacts with NEK7; this interaction alters the subcellular distribution of NEK7 by preventing its nuclear translocation. Post-translationally, hydroxylated at Asn-96, most probably by HIF1AN. Phosphorylations at Ser-5, Ser-225, Thr-318, Ser-319, Ser-366 and Ser-369 occur in a NEK7-dependent manner. In terms of processing, polyubiquitinated. Kidney (at protein level).

The protein localises to the cell projection. It is found in the cilium. It localises to the cytoplasm. Its function is as follows. May be involved in vasopressin signaling in the kidney. This chain is Ankyrin repeat and SAM domain-containing protein 3 (Anks3), found in Mus musculus (Mouse).